Reading from the N-terminus, the 547-residue chain is Chaperonin GroEL (547 aa).

ATP is bound by residues 30–33 (TLGP), Lys51, 87–91 (DGTTT), Gly415, and Asp496. A disordered region spans residues 527-547 (SDKAEPMPMRGGMGGMGGMDF). Residues 537-547 (GGMGGMGGMDF) show a composition bias toward gly residues.

It belongs to the chaperonin (HSP60) family. Forms a cylinder of 14 subunits composed of two heptameric rings stacked back-to-back. Interacts with the co-chaperonin GroES.

It is found in the cytoplasm. It carries out the reaction ATP + H2O + a folded polypeptide = ADP + phosphate + an unfolded polypeptide.. Its function is as follows. Together with its co-chaperonin GroES, plays an essential role in assisting protein folding. The GroEL-GroES system forms a nano-cage that allows encapsulation of the non-native substrate proteins and provides a physical environment optimized to promote and accelerate protein folding. The protein is Chaperonin GroEL of Rickettsia africae (strain ESF-5).